Reading from the N-terminus, the 306-residue chain is MTLEELITEGRNPNTMDIDRLSTVDMLKKINEEDKKVPLAVEKVIPSIAEAIDRIVPRMKKGGRLIYVGAGTSGRIGILDASECPPTFGVDPGLVVGIIAGGDSAIRNAIESAEDDVEGGRQDLVNINLTERDSVIGISASGRTPYVIGALRYAKEVGALTIGLFCNENKNVENIVDVMITPIVGPEVIMGSTRMKAGTAQKLVLNMISTGVMIKLGKVYSNLMVDLQASNEKLRERARRMVKLATGAKEDLIERVLNETNYNVKLAILMIVGDMEKEKAQKLLEMADGYIAEAIKLKDLVLQGEE.

The 164-residue stretch at 55-218 (IVPRMKKGGR…STGVMIKLGK (164 aa)) folds into the SIS domain. Catalysis depends on Glu83, which acts as the Proton donor. Glu114 is an active-site residue.

The protein belongs to the GCKR-like family. MurNAc-6-P etherase subfamily. Homodimer.

It carries out the reaction N-acetyl-D-muramate 6-phosphate + H2O = N-acetyl-D-glucosamine 6-phosphate + (R)-lactate. The protein operates within amino-sugar metabolism; N-acetylmuramate degradation. In terms of biological role, specifically catalyzes the cleavage of the D-lactyl ether substituent of MurNAc 6-phosphate, producing GlcNAc 6-phosphate and D-lactate. The sequence is that of N-acetylmuramic acid 6-phosphate etherase from Caldanaerobacter subterraneus subsp. tengcongensis (strain DSM 15242 / JCM 11007 / NBRC 100824 / MB4) (Thermoanaerobacter tengcongensis).